A 188-amino-acid chain; its full sequence is Calcium load-activated calcium channel (188 aa).

The Lumenal segment spans residues 1 to 4 (MSTM). A helical transmembrane segment spans residues 5–32 (FADTLLIVFISVCTALLAEGITWVLVYR). The stretch at 32–89 (RTDKYKRLKAEVEKQSKKLEKKKETITESAGRQQKKKIERQEEKLKNNNRDLSMVRMK) forms a coiled coil. Residues 33-86 (TDKYKRLKAEVEKQSKKLEKKKETITESAGRQQKKKIERQEEKLKNNNRDLSMV) lie on the Cytoplasmic side of the membrane. Ser-60 bears the Phosphoserine mark. The helical transmembrane segment at 87 to 106 (RMKSMFAIGFCFTALMGMFN) threads the bilayer. Over 107 to 120 (SIFDGRVVAKLPFT) the chain is Lumenal. Residues 121–130 (PLSYIQGLSH) lie within the membrane without spanning it. At 131–140 (RNLLGDDTTD) the chain is on the lumenal side. The helical transmembrane segment at 141-162 (CSFIFLYILCTMSIRQNIQKIL) threads the bilayer. Topologically, residues 163-188 (GLAPSRAATKQAGGFLGPPPPSGKFS) are cytoplasmic. Ser-188 carries the phosphoserine modification.

This sequence belongs to the TMCO1 family. Homodimer and homotetramer. Homodimer under resting conditions; forms homotetramers following ER calcium overload. Component of the GET- and EMC-like (GEL) complex, composed of RAB5IF/OPTI and TMCO1. The GEL complex is part of the multi-pass translocon (MPT) complex, composed of three subcomplexes, the GEL complex (composed of RAB5IF/OPTI and TMCO1), the BOS complex (composed of NCLN/Nicalin, NOMO1 and TMEM147) and the PAT complex (composed of WDR83OS/Asterix and CCDC47). The MPT complex associates with the SEC61 complex.

It is found in the endoplasmic reticulum membrane. The protein localises to the golgi apparatus membrane. It localises to the mitochondrion membrane. It catalyses the reaction Ca(2+)(in) = Ca(2+)(out). Its function is as follows. Endoplasmic reticulum (ER) calcium-selective channel preventing intracellular Ca2(+) stores from overfilling and maintaining calcium homeostasis in the ER. In response to endoplasmic reticulum (ER) Ca2(+) overloading, assembles into a homotetramer, forming a functional calcium-selective channel facilitating Ca2(+) release. Mediates ER Ca2(+) homeostasis in osteoblasts and plays a key role in bone formation, via the CaMKII-HDAC4-RUNX2 signaling axis. Component of the multi-pass translocon (MPT) complex that mediates insertion of multi-pass membrane proteins into the lipid bilayer of membranes. The MPT complex takes over after the SEC61 complex: following membrane insertion of the first few transmembrane segments of proteins by the SEC61 complex, the MPT complex occludes the lateral gate of the SEC61 complex to promote insertion of subsequent transmembrane regions. Within the MPT complex, the GEL subcomplex may mediate insertion of transmembrane regions into the membrane. This is Calcium load-activated calcium channel from Bos taurus (Bovine).